The following is a 257-amino-acid chain: Acetylglutamate kinase (257 aa).

Substrate-binding positions include 41–42 (GG), arginine 63, and asparagine 158.

Belongs to the acetylglutamate kinase family. ArgB subfamily.

The protein localises to the cytoplasm. It catalyses the reaction N-acetyl-L-glutamate + ATP = N-acetyl-L-glutamyl 5-phosphate + ADP. It functions in the pathway amino-acid biosynthesis; L-arginine biosynthesis; N(2)-acetyl-L-ornithine from L-glutamate: step 2/4. In terms of biological role, catalyzes the ATP-dependent phosphorylation of N-acetyl-L-glutamate. The protein is Acetylglutamate kinase of Phocaeicola vulgatus (strain ATCC 8482 / DSM 1447 / JCM 5826 / CCUG 4940 / NBRC 14291 / NCTC 11154) (Bacteroides vulgatus).